The sequence spans 545 residues: Chaperonin GroEL 2 (545 aa).

Residues 29–32, 86–90, G413, 479–481, and D495 each bind ATP; these read TLGP, DGTTT, and NAA.

This sequence belongs to the chaperonin (HSP60) family. In terms of assembly, forms a cylinder of 14 subunits composed of two heptameric rings stacked back-to-back. Interacts with the co-chaperonin GroES.

It is found in the cytoplasm. It catalyses the reaction ATP + H2O + a folded polypeptide = ADP + phosphate + an unfolded polypeptide.. In terms of biological role, together with its co-chaperonin GroES, plays an essential role in assisting protein folding. The GroEL-GroES system forms a nano-cage that allows encapsulation of the non-native substrate proteins and provides a physical environment optimized to promote and accelerate protein folding. This Prochlorococcus marinus (strain SARG / CCMP1375 / SS120) protein is Chaperonin GroEL 2.